Reading from the N-terminus, the 188-residue chain is MYETSDFRKGLKIMLEGKPYVIVDFQHVKPGKGNQFTRTKLRNMLTGQNLESTFKSGEKFEVPNVENKEMSFLYKDDTGYNFMSQETFEQIAMSEEDLGEAKYYLTENLKVVILFYNEKAVACDVPKAVNLTVAQTDPGIKGDRVTGATKPATMETGLTVGVPLHINEGDVLRIDTSTGEYVERVSQK.

It belongs to the elongation factor P family.

Its subcellular location is the cytoplasm. It functions in the pathway protein biosynthesis; polypeptide chain elongation. Functionally, involved in peptide bond synthesis. Stimulates efficient translation and peptide-bond synthesis on native or reconstituted 70S ribosomes in vitro. Probably functions indirectly by altering the affinity of the ribosome for aminoacyl-tRNA, thus increasing their reactivity as acceptors for peptidyl transferase. This Bdellovibrio bacteriovorus (strain ATCC 15356 / DSM 50701 / NCIMB 9529 / HD100) protein is Elongation factor P.